The primary structure comprises 163 residues: Protein-export protein SecB (163 aa).

It belongs to the SecB family. In terms of assembly, homotetramer, a dimer of dimers. One homotetramer interacts with 1 SecA dimer.

It localises to the cytoplasm. Functionally, one of the proteins required for the normal export of preproteins out of the cell cytoplasm. It is a molecular chaperone that binds to a subset of precursor proteins, maintaining them in a translocation-competent state. It also specifically binds to its receptor SecA. This Burkholderia ambifaria (strain MC40-6) protein is Protein-export protein SecB.